Reading from the N-terminus, the 178-residue chain is Redox-sensing transcriptional repressor Rex (178 aa).

Residue 59 to 64 (GVGNMG) participates in NAD(+) binding.

The protein belongs to the transcriptional regulatory Rex family. As to quaternary structure, homodimer.

The protein localises to the cytoplasm. In terms of biological role, modulates transcription in response to changes in cellular NADH/NAD(+) redox state. This is Redox-sensing transcriptional repressor Rex from Streptococcus suis.